We begin with the raw amino-acid sequence, 242 residues long: Small ribosomal subunit protein uS2 (242 aa).

Belongs to the universal ribosomal protein uS2 family.

In Neisseria gonorrhoeae (strain ATCC 700825 / FA 1090), this protein is Small ribosomal subunit protein uS2.